Here is a 153-residue protein sequence, read N- to C-terminus: Superoxide dismutase [Cu-Zn] (153 aa).

His-45, His-47, and His-62 together coordinate Cu cation. Cys-56 and Cys-145 form a disulfide bridge. Positions 62, 70, 79, and 82 each coordinate Zn(2+). His-119 is a binding site for Cu cation.

This sequence belongs to the Cu-Zn superoxide dismutase family. Homodimer. It depends on Cu cation as a cofactor. Zn(2+) serves as cofactor.

It is found in the cytoplasm. The catalysed reaction is 2 superoxide + 2 H(+) = H2O2 + O2. Destroys radicals which are normally produced within the cells and which are toxic to biological systems. In Drosophila erecta (Fruit fly), this protein is Superoxide dismutase [Cu-Zn].